We begin with the raw amino-acid sequence, 325 residues long: tRNA N6-adenosine threonylcarbamoyltransferase (325 aa).

Fe cation contacts are provided by H107 and H111. Residues 129–133, D162, G175, and N265 contribute to the substrate site; that span reads LVSGG. D293 contacts Fe cation.

The protein belongs to the KAE1 / TsaD family. The cofactor is Fe(2+).

Its subcellular location is the cytoplasm. The enzyme catalyses L-threonylcarbamoyladenylate + adenosine(37) in tRNA = N(6)-L-threonylcarbamoyladenosine(37) in tRNA + AMP + H(+). Functionally, required for the formation of a threonylcarbamoyl group on adenosine at position 37 (t(6)A37) in tRNAs that read codons beginning with adenine. Is involved in the transfer of the threonylcarbamoyl moiety of threonylcarbamoyl-AMP (TC-AMP) to the N6 group of A37, together with TsaE and TsaB. TsaD likely plays a direct catalytic role in this reaction. The sequence is that of tRNA N6-adenosine threonylcarbamoyltransferase from Sulfurimonas denitrificans (strain ATCC 33889 / DSM 1251) (Thiomicrospira denitrificans (strain ATCC 33889 / DSM 1251)).